A 310-amino-acid chain; its full sequence is MASYASEVKKELTSIEVHPEHAKAELAAFLRMNAVLSRHDGQMSLDIVTENPAIARRIFSLIKTAYGFDPQLIVTRKMKLKKNHQYLVRVAQMVSEIMADLEIYSPKKGFITGVPDKIKYSEQRSMSYLRGGFLASGSVNNPETSRYHLEIYCTYANHSQDLQEIMNKYFDLNAKVTARRSGSIVYLKEAEKIGDFLHVVGAVNAMLAFEDLRIMRDMRNSVNRLVNCDTANLRKTAGAAAKQVEDIELIDKKQGLEPLPEKLASLARFRLQHPELSLKELAEQVPDGPISKSGVNHRLKKLHEIAENLR.

Residues 277–310 (SLKELAEQVPDGPISKSGVNHRLKKLHEIAENLR) constitute a DNA-binding region (H-T-H motif).

It belongs to the WhiA family.

Its function is as follows. Involved in cell division and chromosome segregation. This chain is Probable cell division protein WhiA, found in Lactobacillus delbrueckii subsp. bulgaricus (strain ATCC 11842 / DSM 20081 / BCRC 10696 / JCM 1002 / NBRC 13953 / NCIMB 11778 / NCTC 12712 / WDCM 00102 / Lb 14).